The sequence spans 278 residues: Insulin-like growth factor-binding protein-like 1 (278 aa).

Residues methionine 1–serine 25 form the signal peptide. Residues arginine 34 to alanine 109 enclose the IGFBP N-terminal domain. Intrachain disulfides connect cysteine 38–cysteine 63, cysteine 41–cysteine 65, cysteine 46–cysteine 66, cysteine 52–cysteine 69, cysteine 77–cysteine 91, cysteine 85–cysteine 106, and cysteine 115–cysteine 151. A Kazal-like domain is found at alanine 95–phenylalanine 153. In terms of domain architecture, Ig-like C2-type spans proline 155–threonine 259. A glycan (N-linked (GlcNAc...) asparagine) is linked at asparagine 166. An intrachain disulfide couples cysteine 176 to cysteine 243.

As to expression, expressed at the highest level in both brain and testis, with lower levels in the prostate, bladder and lung.

The protein resides in the secreted. IGF-binding proteins prolong the half-life of IGFs and have been shown to either inhibit or stimulate the growth promoting effects of the IGFs in cell culture. They alter the interaction of IGFs with their cell surface receptors. May be a putative tumor suppressor protein. The protein is Insulin-like growth factor-binding protein-like 1 (IGFBPL1) of Homo sapiens (Human).